We begin with the raw amino-acid sequence, 57 residues long: UPF0391 membrane protein XC_2938 (57 aa).

The next 2 helical transmembrane spans lie at 4–24 (WAII…GGMA) and 33–53 (FLFW…MTIA).

It belongs to the UPF0391 family.

The protein resides in the cell membrane. The chain is UPF0391 membrane protein XC_2938 from Xanthomonas campestris pv. campestris (strain 8004).